The chain runs to 631 residues: Acurin A biosynthesis cluster transcription regulator (631 aa).

Residues 1–11 (MSPNMSLTASH) show a composition bias toward polar residues. Positions 1-28 (MSPNMSLTASHPQQPQPTPQSKAQLTRQ) are disordered. A DNA-binding region (zn(2)-C6 fungal-type) is located at residues 30-62 (CNRCHASKLKCLRPPGVTTSKSCIRCIKADTEC). Disordered regions lie at residues 64–141 (YDPP…PDNR), 489–522 (CSSS…HPAT), and 536–573 (HSSS…YPTP). Basic and acidic residues predominate over residues 88 to 99 (IEAREPEVTDPR). The segment covering 119-128 (NGSLAPSSAA) has biased composition (polar residues).

It is found in the nucleus. Its function is as follows. Transcription factor that positively regulates the expression of the cluster that mediates the biosynthesis of acurin A, a highly reduced polyketide coupled to a serine via a peptide bond. In Aspergillus aculeatus (strain ATCC 16872 / CBS 172.66 / WB 5094), this protein is Acurin A biosynthesis cluster transcription regulator.